The sequence spans 329 residues: MGDILFSSPQSMFSHTMNKNSILHTHSIIGKTFFSEIGIGISGNSFLLLVHILKFIRGHRPRLTDLPIGLLSLIHLLMLLVAAFIATDIFISRRGWDDIICKFLVYLYRVLRGFSLCTTSMLSILQAIILSPRSSCLAKFKHISPHHISGAILFLSVLYMLIGSQLLVSIIATPNLTMNDFIYVTQSCSILPLSYLMQSIYSTLLAIREFFLISLMVLSNWYMVALLSMHRKQTQHLHGTNLSPKKSPEQSATQTILMLISFFLLMTIYDTIVSCSRTMFLNDPTSYSIELFIMHIYATVSPFVFMSTEKHIVNFLRSLGKRVINFNLH.

The Extracellular portion of the chain corresponds to 1-32 (MGDILFSSPQSMFSHTMNKNSILHTHSIIGKT). Residues 33 to 53 (FFSEIGIGISGNSFLLLVHIL) traverse the membrane as a helical segment. The Cytoplasmic segment spans residues 54-65 (KFIRGHRPRLTD). A helical transmembrane segment spans residues 66 to 86 (LPIGLLSLIHLLMLLVAAFIA). The Extracellular segment spans residues 87–109 (TDIFISRRGWDDIICKFLVYLYR). A disulfide bridge links Cys-101 with Cys-188. Residues 110 to 130 (VLRGFSLCTTSMLSILQAIIL) traverse the membrane as a helical segment. Residues 131–150 (SPRSSCLAKFKHISPHHISG) lie on the Cytoplasmic side of the membrane. Residues 151-171 (AILFLSVLYMLIGSQLLVSII) form a helical membrane-spanning segment. Topologically, residues 172–209 (ATPNLTMNDFIYVTQSCSILPLSYLMQSIYSTLLAIRE) are extracellular. The N-linked (GlcNAc...) asparagine glycan is linked to Asn-175. The helical transmembrane segment at 210 to 230 (FFLISLMVLSNWYMVALLSMH) threads the bilayer. At 231–254 (RKQTQHLHGTNLSPKKSPEQSATQ) the chain is on the cytoplasmic side. Residues 255–275 (TILMLISFFLLMTIYDTIVSC) traverse the membrane as a helical segment. Topologically, residues 276-285 (SRTMFLNDPT) are extracellular. The helical transmembrane segment at 286–306 (SYSIELFIMHIYATVSPFVFM) threads the bilayer. The Cytoplasmic portion of the chain corresponds to 307-329 (STEKHIVNFLRSLGKRVINFNLH).

It belongs to the G-protein coupled receptor 1 family.

The protein resides in the cell membrane. Its function is as follows. Putative pheromone receptor implicated in the regulation of social and reproductive behavior. The polypeptide is Vomeronasal type-1 receptor 42 (Vmn1r42) (Mus musculus (Mouse)).